The following is a 247-amino-acid chain: Uridylate kinase (247 aa).

18 to 21 (KLSG) serves as a coordination point for ATP. Gly60 contacts UMP. 2 residues coordinate ATP: Gly61 and Arg65. UMP contacts are provided by residues Asp80 and 141–148 (TGNPFFTT). Residues Thr168, Tyr174, and Asp177 each contribute to the ATP site.

Belongs to the UMP kinase family. As to quaternary structure, homohexamer.

The protein localises to the cytoplasm. The catalysed reaction is UMP + ATP = UDP + ADP. It participates in pyrimidine metabolism; CTP biosynthesis via de novo pathway; UDP from UMP (UMPK route): step 1/1. With respect to regulation, inhibited by UTP. Its function is as follows. Catalyzes the reversible phosphorylation of UMP to UDP. This is Uridylate kinase from Ectopseudomonas mendocina (strain ymp) (Pseudomonas mendocina).